Consider the following 347-residue polypeptide: Protein RecA (347 aa).

Gly65–Thr72 is an ATP binding site. Over residues Lys327 to Glu336 the composition is skewed to basic and acidic residues. The interval Lys327–Met347 is disordered. The segment covering Glu337 to Met347 has biased composition (acidic residues).

Belongs to the RecA family.

It localises to the cytoplasm. Can catalyze the hydrolysis of ATP in the presence of single-stranded DNA, the ATP-dependent uptake of single-stranded DNA by duplex DNA, and the ATP-dependent hybridization of homologous single-stranded DNAs. It interacts with LexA causing its activation and leading to its autocatalytic cleavage. This is Protein RecA from Xylella fastidiosa (strain 9a5c).